The chain runs to 424 residues: Probable threonylcarbamoyladenosine tRNA methylthiotransferase (424 aa).

Positions 1–106 (MRVAIETYGC…VVDAVYSALN (106 aa)) constitute an MTTase N-terminal domain. [4Fe-4S] cluster is bound by residues C10, C44, C73, C143, C147, and C150. One can recognise a Radical SAM core domain in the interval 129–359 (LRENAIAIVS…TDLMRKIGLE (231 aa)). Residues 362–420 (KRFVGKKLRVLVTKEGKNGRNLARMNSYRAVVTEGAVGEFVEVKIKDCRFNYLIGQLAA) form the TRAM domain.

It belongs to the methylthiotransferase family. CDKAL1 subfamily. [4Fe-4S] cluster is required as a cofactor.

It carries out the reaction N(6)-L-threonylcarbamoyladenosine(37) in tRNA + (sulfur carrier)-SH + AH2 + 2 S-adenosyl-L-methionine = 2-methylsulfanyl-N(6)-L-threonylcarbamoyladenosine(37) in tRNA + (sulfur carrier)-H + 5'-deoxyadenosine + L-methionine + A + S-adenosyl-L-homocysteine + 2 H(+). Its function is as follows. Catalyzes the methylthiolation of N6-threonylcarbamoyladenosine (t(6)A), leading to the formation of 2-methylthio-N6-threonylcarbamoyladenosine (ms(2)t(6)A) at position 37 in tRNAs that read codons beginning with adenine. The chain is Probable threonylcarbamoyladenosine tRNA methylthiotransferase from Archaeoglobus fulgidus (strain ATCC 49558 / DSM 4304 / JCM 9628 / NBRC 100126 / VC-16).